Here is a 176-residue protein sequence, read N- to C-terminus: Large ribosomal subunit protein uL10 (176 aa).

This sequence belongs to the universal ribosomal protein uL10 family. Part of the ribosomal stalk of the 50S ribosomal subunit. The N-terminus interacts with L11 and the large rRNA to form the base of the stalk. The C-terminus forms an elongated spine to which L12 dimers bind in a sequential fashion forming a multimeric L10(L12)X complex.

Its function is as follows. Forms part of the ribosomal stalk, playing a central role in the interaction of the ribosome with GTP-bound translation factors. This Acaryochloris marina (strain MBIC 11017) protein is Large ribosomal subunit protein uL10.